The sequence spans 221 residues: Endonuclease V (221 aa).

Mg(2+)-binding residues include aspartate 44 and aspartate 112.

Belongs to the endonuclease V family. The cofactor is Mg(2+).

The protein resides in the cytoplasm. The catalysed reaction is Endonucleolytic cleavage at apurinic or apyrimidinic sites to products with a 5'-phosphate.. Its function is as follows. DNA repair enzyme involved in the repair of deaminated bases. Selectively cleaves double-stranded DNA at the second phosphodiester bond 3' to a deoxyinosine leaving behind the intact lesion on the nicked DNA. This is Endonuclease V from Nostoc sp. (strain PCC 7120 / SAG 25.82 / UTEX 2576).